The primary structure comprises 512 residues: Mannose-1-phosphate guanylyltransferase (512 aa).

The protein belongs to the mannose-6-phosphate isomerase type 2 family.

The enzyme catalyses alpha-D-mannose 1-phosphate + GTP + H(+) = GDP-alpha-D-mannose + diphosphate. This chain is Mannose-1-phosphate guanylyltransferase (noeJ), found in Sinorhizobium fredii (strain NBRC 101917 / NGR234).